A 161-amino-acid chain; its full sequence is Nucleotide-binding protein Nmul_A1044 (161 aa).

Belongs to the YajQ family.

Nucleotide-binding protein. This is Nucleotide-binding protein Nmul_A1044 from Nitrosospira multiformis (strain ATCC 25196 / NCIMB 11849 / C 71).